The primary structure comprises 261 residues: Pantothenate synthetase (261 aa).

Residue 29 to 36 (MGALHNGH) coordinates ATP. Histidine 36 functions as the Proton donor in the catalytic mechanism. Residue glutamine 60 coordinates (R)-pantoate. Residue glutamine 60 coordinates beta-alanine. 147–150 (GEKD) is an ATP binding site. Residue glutamine 153 participates in (R)-pantoate binding. 184-187 (LSSR) serves as a coordination point for ATP.

This sequence belongs to the pantothenate synthetase family. Homodimer.

It is found in the cytoplasm. The enzyme catalyses (R)-pantoate + beta-alanine + ATP = (R)-pantothenate + AMP + diphosphate + H(+). It participates in cofactor biosynthesis; (R)-pantothenate biosynthesis; (R)-pantothenate from (R)-pantoate and beta-alanine: step 1/1. Functionally, catalyzes the condensation of pantoate with beta-alanine in an ATP-dependent reaction via a pantoyl-adenylate intermediate. This chain is Pantothenate synthetase, found in Francisella philomiragia subsp. philomiragia (strain ATCC 25017 / CCUG 19701 / FSC 153 / O#319-036).